The chain runs to 274 residues: MQFSKMHGLGNDFMVVDAVTQNVFFSPDMIRRLADRHQGVGFDQLLVVEPPYDPDLDFHYRIFNADGSEVAQCGNGARCFARFVRLKGLTNKREIRVSTANGRMVLTVNEDEQVRVNMGEPVFEPSLVPFRANKAEKTYIMRAAEQTVLCGVVSMGNPHCVIQVDDVATAPVETLGPLMESHERFPERANIGFMQVMNTEHIRLRVFERGAGETQACGSGACGAVAVGIQQGLLAAQVRVDLPGGRLDIAWKGPGNPLFMTGPATHVYDGFIHL.

The substrate site is built by Asn-11, Gln-44, and Asn-64. Cys-73 functions as the Proton donor in the catalytic mechanism. Residues 74-75, Asn-157, Asn-190, and 208-209 each bind substrate; these read GN and ER. Catalysis depends on Cys-217, which acts as the Proton acceptor. 218–219 serves as a coordination point for substrate; sequence GS.

It belongs to the diaminopimelate epimerase family. As to quaternary structure, homodimer.

It localises to the cytoplasm. It catalyses the reaction (2S,6S)-2,6-diaminopimelate = meso-2,6-diaminopimelate. It functions in the pathway amino-acid biosynthesis; L-lysine biosynthesis via DAP pathway; DL-2,6-diaminopimelate from LL-2,6-diaminopimelate: step 1/1. Functionally, catalyzes the stereoinversion of LL-2,6-diaminopimelate (L,L-DAP) to meso-diaminopimelate (meso-DAP), a precursor of L-lysine and an essential component of the bacterial peptidoglycan. This Cronobacter sakazakii (strain ATCC BAA-894) (Enterobacter sakazakii) protein is Diaminopimelate epimerase.